Consider the following 161-residue polypeptide: Eukaryotic translation initiation factor 5A-2 (161 aa).

At Lys54 the chain carries Hypusine.

The protein belongs to the eIF-5A family. Lys-54 undergoes hypusination, a unique post-translational modification that consists in the addition of a butylamino group from spermidine to lysine side chain and leads to the formation of a hypusine residue. eIF-5As are the only known proteins to undergo this modification, which is essential for their function. In terms of tissue distribution, expressed in the somatic tissues.

Its subcellular location is the cytoplasm. In terms of biological role, translation factor that promotes translation elongation and termination, particularly upon ribosome stalling at specific amino acid sequence contexts. Binds between the exit (E) and peptidyl (P) site of the ribosome and promotes rescue of stalled ribosome: specifically required for efficient translation of polyproline-containing peptides as well as other motifs that stall the ribosome. Acts as a ribosome quality control (RQC) cofactor by joining the RQC complex to facilitate peptidyl transfer during CAT tailing step. Acts in somatic tissues and its function in the soma is essential for normal growth and reproduction. The sequence is that of Eukaryotic translation initiation factor 5A-2 (iff-2) from Caenorhabditis elegans.